The chain runs to 530 residues: UDP-glucuronosyltransferase 2B31 (530 aa).

The first 24 residues, 1–24, serve as a signal peptide directing secretion; it reads MSMKWISVLLGLQLSCYFSSGSCG. At Lys-136 the chain carries N6-succinyllysine. Asn-316 carries an N-linked (GlcNAc...) asparagine glycan. A helical transmembrane segment spans residues 495–515; sequence IGFLLACVATAIFVTTQCCLF.

The protein belongs to the UDP-glycosyltransferase family.

It is found in the microsome membrane. The protein localises to the endoplasmic reticulum membrane. The catalysed reaction is glucuronate acceptor + UDP-alpha-D-glucuronate = acceptor beta-D-glucuronoside + UDP + H(+). In terms of biological role, UDPGTs are of major importance in the conjugation and subsequent elimination of potentially toxic xenobiotics and endogenous compounds. This isozyme has glucuronidating capacity on phenols, opioids, and carboxylic acid-containing drugs. The protein is UDP-glucuronosyltransferase 2B31 (UGT2B31) of Canis lupus familiaris (Dog).